The chain runs to 413 residues: 1-deoxy-D-xylulose 5-phosphate reductoisomerase (413 aa).

NADPH contacts are provided by Thr28, Gly29, Ser30, Ile31, Gly54, Arg55, Asn56, and Asn142. Residue Lys143 participates in 1-deoxy-D-xylulose 5-phosphate binding. Position 144 (Glu144) interacts with NADPH. Mn(2+) is bound at residue Asp168. Positions 169, 170, 194, and 217 each coordinate 1-deoxy-D-xylulose 5-phosphate. Mn(2+) is bound at residue Glu170. Gly223 is an NADPH binding site. Residues Ser230, Asn235, Lys236, and Glu239 each contribute to the 1-deoxy-D-xylulose 5-phosphate site. Mn(2+) is bound at residue Glu239.

The protein belongs to the DXR family. Requires Mg(2+) as cofactor. The cofactor is Mn(2+).

It catalyses the reaction 2-C-methyl-D-erythritol 4-phosphate + NADP(+) = 1-deoxy-D-xylulose 5-phosphate + NADPH + H(+). Its pathway is isoprenoid biosynthesis; isopentenyl diphosphate biosynthesis via DXP pathway; isopentenyl diphosphate from 1-deoxy-D-xylulose 5-phosphate: step 1/6. Its function is as follows. Catalyzes the NADPH-dependent rearrangement and reduction of 1-deoxy-D-xylulose-5-phosphate (DXP) to 2-C-methyl-D-erythritol 4-phosphate (MEP). The sequence is that of 1-deoxy-D-xylulose 5-phosphate reductoisomerase from Thermosynechococcus vestitus (strain NIES-2133 / IAM M-273 / BP-1).